A 152-amino-acid polypeptide reads, in one-letter code: Ribonuclease H (152 aa).

The region spanning 1 to 142 is the RNase H type-1 domain; sequence MKEVTIYTDG…CDELARAAIA (142 aa). Mg(2+) contacts are provided by D9, E47, D69, and D134.

It belongs to the RNase H family. As to quaternary structure, monomer. It depends on Mg(2+) as a cofactor.

It is found in the cytoplasm. It catalyses the reaction Endonucleolytic cleavage to 5'-phosphomonoester.. Its function is as follows. Endonuclease that specifically degrades the RNA of RNA-DNA hybrids. The sequence is that of Ribonuclease H from Moorella thermoacetica (strain ATCC 39073 / JCM 9320).